Here is a 379-residue protein sequence, read N- to C-terminus: Chaperone protein DnaJ (379 aa).

One can recognise a J domain in the interval 4–69; that stretch reads DLYETLGVQK…QKRAAYDRYG (66 aa). Residues 137-215 form a CR-type zinc finger; the sequence is GKTAQIRVPT…CHGQGRVVEE (79 aa). Cysteine 150, cysteine 153, cysteine 167, cysteine 170, cysteine 189, cysteine 192, cysteine 203, and cysteine 206 together coordinate Zn(2+). CXXCXGXG motif repeat units lie at residues 150–157, 167–174, 189–196, and 203–210; these read CDVCTGTG, CGTCQGTG, CPTCGGRG, and CTKCHGQG.

This sequence belongs to the DnaJ family. In terms of assembly, homodimer. It depends on Zn(2+) as a cofactor.

Its subcellular location is the cytoplasm. Participates actively in the response to hyperosmotic and heat shock by preventing the aggregation of stress-denatured proteins and by disaggregating proteins, also in an autonomous, DnaK-independent fashion. Unfolded proteins bind initially to DnaJ; upon interaction with the DnaJ-bound protein, DnaK hydrolyzes its bound ATP, resulting in the formation of a stable complex. GrpE releases ADP from DnaK; ATP binding to DnaK triggers the release of the substrate protein, thus completing the reaction cycle. Several rounds of ATP-dependent interactions between DnaJ, DnaK and GrpE are required for fully efficient folding. Also involved, together with DnaK and GrpE, in the DNA replication of plasmids through activation of initiation proteins. This chain is Chaperone protein DnaJ, found in Rhizobium meliloti (strain 1021) (Ensifer meliloti).